The chain runs to 149 residues: Glutamate mutase sigma subunit (149 aa).

One can recognise a B12-binding domain in the interval 5-138; the sequence is DPTVVLGTIG…DAVKTELDVD (134 aa). Residues 15-19, His-18, 63-65, and 94-98 contribute to the adenosylcob(III)alamin site; these read SDAHA, SSL, and NLAVG.

Belongs to the methylaspartate mutase GlmS subunit family. As to quaternary structure, heterotetramer composed of 2 epsilon subunits (GlmE) and 2 sigma subunits (GlmS). GlmE exists as a homodimer and GlmS as a monomer. Adenosylcob(III)alamin is required as a cofactor.

The enzyme catalyses (2S,3S)-3-methyl-L-aspartate = L-glutamate. Its pathway is amino-acid degradation; L-glutamate degradation via mesaconate pathway; acetate and pyruvate from L-glutamate: step 1/4. Catalyzes the carbon skeleton rearrangement of L-glutamate to L-threo-3-methylaspartate ((2S,3S)-3-methylaspartate). The sequence is that of Glutamate mutase sigma subunit from Halobacterium salinarum (strain ATCC 700922 / JCM 11081 / NRC-1) (Halobacterium halobium).